We begin with the raw amino-acid sequence, 1087 residues long: DYRK-family kinase pom1 (1087 aa).

4 disordered regions span residues 57-81 (CPNR…NTNI), 120-182 (LLRS…SKSF), 238-308 (MAPK…LSTI), and 336-578 (NHSH…PSLS). Over residues 62–81 (SSSSTAADTSPSTNASNTNI) the composition is skewed to low complexity. Composition is skewed to polar residues over residues 132–165 (KNSP…PSSL) and 246–256 (WRHTNFHSTSH). A compositionally biased stretch (low complexity) spans 292 to 307 (SGSLTKSSSESKNLST). Over residues 336-361 (NHSHVGSQTKSHSFATPSVFDNNKPV) the composition is skewed to polar residues. Residues 362–373 (SSDNHNNTTTSS) show a composition bias toward low complexity. Residues 397-407 (VDGHRNHEAKH) show a composition bias toward basic and acidic residues. Residues 429-442 (RGGFFSRLSFSRSS) are compositionally biased toward low complexity. The segment covering 478-488 (NGKKTPTRTKS) has biased composition (basic residues). Ser513 is modified (phosphoserine). Basic and acidic residues predominate over residues 527-536 (VSREPEKPEE). Positions 555 to 578 (QQRSVSYTPKRSSDTSESLQPSLS) are enriched in polar residues. Positions 699 to 995 (YEVVDFLGKG…PQQAAQHDFL (297 aa)) constitute a Protein kinase domain. Residues 705–713 (LGKGSFGQV) and Lys728 contribute to the ATP site. Residue Asp825 is the Proton acceptor of the active site. 2 disordered regions span residues 992-1011 (HDFL…PARQ) and 1017-1056 (PNIE…LVRS). Polar residues predominate over residues 1045–1055 (EPSNQASNLVR).

It belongs to the protein kinase superfamily. CMGC Ser/Thr protein kinase family. MNB/DYRK subfamily. In terms of assembly, interacts with rga4. Interacts with tea4; this interaction triggers pom1 plasma membrane association. Autophosphorylates at the cell cortex to lower lipid affinity and promote membrane release. Dephosphorylation by dis2, regulated by tea4, triggers membrane association.

Its subcellular location is the cell tip. It localises to the cell membrane. It carries out the reaction L-seryl-[protein] + ATP = O-phospho-L-seryl-[protein] + ADP + H(+). The catalysed reaction is L-threonyl-[protein] + ATP = O-phospho-L-threonyl-[protein] + ADP + H(+). It catalyses the reaction L-tyrosyl-[protein] + ATP = O-phospho-L-tyrosyl-[protein] + ADP + H(+). Functionally, polarity factor involved in localization of polarized growth and cytokinesis. Forms an intracellular gradient that serves to measure cell length and control mitotic entry. Controls the timing of mitotic commitment by regulating the inhibitory impact of cdr1/cdr2 on wee1 activity. Directly phosphorylates the tail of cdr2 which inhibits cdr2 activation by ssp1. Cdr2 phosphorylation by pom1 also modulates cdr2 association with membranes and inhibits cdr2 interaction with mid1, reducing its clustering ability, possibly via the down-regulation of cdr2 kinase activity. Acts as a negative regulator of mid1 distribution, excluding mid1 from non-growing ends, which prevents division-septum assembly at the cell ends. The pom1 polar gradient also mediates mitotic entry by regulating cdk1. Plays an essential role in proper localization and phosphorylation of a GAP for cdc42, rga4, which ensures bipolar localization of GTP-bound, active cdc42 involved in F-actin formation. Phosphorylates multiple other substrates that function in polarized cell growth, including tea4, mod5, pal1, the Rho GAP rga7, and the Arf GEF syt22. The sequence is that of DYRK-family kinase pom1 from Schizosaccharomyces pombe (strain 972 / ATCC 24843) (Fission yeast).